A 420-amino-acid chain; its full sequence is Serine hydroxymethyltransferase (420 aa).

(6S)-5,6,7,8-tetrahydrofolate contacts are provided by residues L123 and 127-129; that span reads GHL. K232 carries the N6-(pyridoxal phosphate)lysine modification.

It belongs to the SHMT family. Homodimer. The cofactor is pyridoxal 5'-phosphate.

The protein localises to the cytoplasm. It catalyses the reaction (6R)-5,10-methylene-5,6,7,8-tetrahydrofolate + glycine + H2O = (6S)-5,6,7,8-tetrahydrofolate + L-serine. Its pathway is one-carbon metabolism; tetrahydrofolate interconversion. It functions in the pathway amino-acid biosynthesis; glycine biosynthesis; glycine from L-serine: step 1/1. Functionally, catalyzes the reversible interconversion of serine and glycine with tetrahydrofolate (THF) serving as the one-carbon carrier. This reaction serves as the major source of one-carbon groups required for the biosynthesis of purines, thymidylate, methionine, and other important biomolecules. Also exhibits THF-independent aldolase activity toward beta-hydroxyamino acids, producing glycine and aldehydes, via a retro-aldol mechanism. This is Serine hydroxymethyltransferase from Ehrlichia chaffeensis (strain ATCC CRL-10679 / Arkansas).